The following is a 395-amino-acid chain: Na(+)/H(+) antiporter NhaA (395 aa).

The next 11 membrane-spanning stretches (helical) occupy residues 15–35, 66–86, 101–121, 132–152, 161–181, 184–204, 219–239, 265–285, 301–321, 339–359, and 366–386; these read FLGS…AGFV, IDAW…ILEI, VALP…TYLL, GWAI…LALG, AWLM…IAVF, NALY…LIGA, CILL…AGVI, ALTP…NVGV, LGIM…ATLL, VFGL…IANL, and LVIP…LAGW.

It belongs to the NhaA Na(+)/H(+) (TC 2.A.33) antiporter family.

Its subcellular location is the cell inner membrane. The catalysed reaction is Na(+)(in) + 2 H(+)(out) = Na(+)(out) + 2 H(+)(in). Na(+)/H(+) antiporter that extrudes sodium in exchange for external protons. This chain is Na(+)/H(+) antiporter NhaA, found in Gluconacetobacter diazotrophicus (strain ATCC 49037 / DSM 5601 / CCUG 37298 / CIP 103539 / LMG 7603 / PAl5).